The sequence spans 214 residues: ATP phosphoribosyltransferase (214 aa).

This sequence belongs to the ATP phosphoribosyltransferase family. Short subfamily. In terms of assembly, heteromultimer composed of HisG and HisZ subunits.

The protein resides in the cytoplasm. The catalysed reaction is 1-(5-phospho-beta-D-ribosyl)-ATP + diphosphate = 5-phospho-alpha-D-ribose 1-diphosphate + ATP. Its pathway is amino-acid biosynthesis; L-histidine biosynthesis; L-histidine from 5-phospho-alpha-D-ribose 1-diphosphate: step 1/9. In terms of biological role, catalyzes the condensation of ATP and 5-phosphoribose 1-diphosphate to form N'-(5'-phosphoribosyl)-ATP (PR-ATP). Has a crucial role in the pathway because the rate of histidine biosynthesis seems to be controlled primarily by regulation of HisG enzymatic activity. The protein is ATP phosphoribosyltransferase (hisG) of Aquifex aeolicus (strain VF5).